We begin with the raw amino-acid sequence, 199 residues long: Phosphoserine phosphatase RsbX (199 aa).

The PPM-type phosphatase domain maps to 11–198 (QTLVYQLNKE…DDLTYILGQL (188 aa)).

The enzyme catalyses O-phospho-L-serine + H2O = L-serine + phosphate. It carries out the reaction O-phospho-D-serine + H2O = D-serine + phosphate. Negative regulator of sigma-B activity. Dephosphorylates RsbS. Plays a role both in maintaining low sigma-B activity during growth and in reestablishing prestress sigma-B activity after induction. Could have a negative feedback role by indirectly communicating sigma-B protein levels. This chain is Phosphoserine phosphatase RsbX (rsbX), found in Bacillus subtilis (strain 168).